The following is a 310-amino-acid chain: Protein translocase subunit SecF (310 aa).

6 helical membrane passes run 18–38 (FFTISGLLLLLTVGAFIYRGG), 135–155 (QAVYAFLFAFLVMIVYVAFRF), 162–182 (IVSVVGIIHDIVISLGFVILA), 188–208 (ITIVAALLTVVGYSINDTIVL), 240–260 (IVTSLTVFIVACSLFFFGGEV), and 267–287 (IMIIGTVLGVFSTIFVCAPLI).

Belongs to the SecD/SecF family. SecF subfamily. In terms of assembly, forms a complex with SecD. Part of the essential Sec protein translocation apparatus which comprises SecA, SecYEG and auxiliary proteins SecDF. Other proteins may also be involved.

The protein resides in the cell inner membrane. Its function is as follows. Part of the Sec protein translocase complex. Interacts with the SecYEG preprotein conducting channel. SecDF uses the proton motive force (PMF) to complete protein translocation after the ATP-dependent function of SecA. The sequence is that of Protein translocase subunit SecF from Endomicrobium trichonymphae.